The chain runs to 933 residues: Serine/threonine-protein kinase PknD (933 aa).

Residues 4–291 (YDIIRMIGKG…ELKDDIEQHL (288 aa)) enclose the Protein kinase domain. Residues 10-18 (IGKGGMGEV) and Lys33 contribute to the ATP site. Residue Asp138 is the Proton acceptor of the active site.

It belongs to the protein kinase superfamily. Ser/Thr protein kinase family. Autophosphorylated on serine and threonine residues.

It carries out the reaction L-seryl-[protein] + ATP = O-phospho-L-seryl-[protein] + ADP + H(+). The catalysed reaction is L-threonyl-[protein] + ATP = O-phospho-L-threonyl-[protein] + ADP + H(+). Its function is as follows. Together with the serine/threonine kinase Pkn1, may play a role in the specific interactions with host proteins during intracellular growth. The polypeptide is Serine/threonine-protein kinase PknD (Chlamydia felis (strain Fe/C-56) (Chlamydophila felis)).